The sequence spans 575 residues: Arginine--tRNA ligase (575 aa).

A 'HIGH' region motif is present at residues 131 to 141; sequence ANPTGPLHVGH.

Belongs to the class-I aminoacyl-tRNA synthetase family. As to quaternary structure, monomer.

The protein resides in the cytoplasm. It carries out the reaction tRNA(Arg) + L-arginine + ATP = L-arginyl-tRNA(Arg) + AMP + diphosphate. This chain is Arginine--tRNA ligase, found in Jannaschia sp. (strain CCS1).